Here is a 373-residue protein sequence, read N- to C-terminus: Putative glutamate--cysteine ligase 2-2 (373 aa).

The protein belongs to the glutamate--cysteine ligase type 2 family. YbdK subfamily.

It catalyses the reaction L-cysteine + L-glutamate + ATP = gamma-L-glutamyl-L-cysteine + ADP + phosphate + H(+). Functionally, ATP-dependent carboxylate-amine ligase which exhibits weak glutamate--cysteine ligase activity. In Legionella pneumophila (strain Corby), this protein is Putative glutamate--cysteine ligase 2-2.